A 504-amino-acid polypeptide reads, in one-letter code: MEKFQGYLEFDGARQQSFLYPLFFREYIYVLAYDHGLNRLNRNRSIFLENADYDKKYSSLIVKRLILRMYEQNRLIIPTKDLNQNNFLGHTSLFYYQMISVLFAVIVEIPFSLRLGSSFEGNLFKKSYNLQSIHSIFPFLEDKLSHFNYVLDVVIPYPIHLEILVQTLRYRVKDASSLHFLRFCVYEYFNCKNFYIKKKSILNPRFFLFLYNSHVCEYESIFFFLRKRSSHLRSTSYEVLFERIFFYGKIQHFFKVFVNNFPAILGLLKDPFIHYVRYHGRSILATKDTPLLMNKWKYYFVNLWQCYFSVWFQSQKVHIKQLSKDNLEFLGYLSSLRLNPLVVRSQMLENSFLIDNVRIKLDSKIPISSIIGSLAKDKFCNVLGHPISKVIWTHSSDSDILNRFVRICRNISHYYSGSSKKKFLYRIKYILRLCCVKTLARKHKSTVRAFLKRLGSGLLEEFLTGEDQVLSLIFPISYYASKRLYRVRIWYLDILYLNDLANHE.

This sequence belongs to the intron maturase 2 family. MatK subfamily.

Its subcellular location is the plastid. The protein localises to the chloroplast. Its function is as follows. Usually encoded in the trnK tRNA gene intron. Probably assists in splicing its own and other chloroplast group II introns. The chain is Maturase K from Cardamine amara (Large bitter-cress).